A 487-amino-acid polypeptide reads, in one-letter code: 3-octaprenyl-4-hydroxybenzoate carboxy-lyase (487 aa).

Position 172 (N172) interacts with Mn(2+). Residues 175–177 (IYR), 189–191 (RWL), and 194–195 (RG) contribute to the prenylated FMN site. Mn(2+) is bound at residue E238. D287 serves as the catalytic Proton donor.

The protein belongs to the UbiD family. In terms of assembly, homohexamer. Prenylated FMN serves as cofactor. Mn(2+) is required as a cofactor.

It localises to the cell membrane. The enzyme catalyses a 4-hydroxy-3-(all-trans-polyprenyl)benzoate + H(+) = a 2-(all-trans-polyprenyl)phenol + CO2. It functions in the pathway cofactor biosynthesis; ubiquinone biosynthesis. Catalyzes the decarboxylation of 3-octaprenyl-4-hydroxy benzoate to 2-octaprenylphenol, an intermediate step in ubiquinone biosynthesis. The sequence is that of 3-octaprenyl-4-hydroxybenzoate carboxy-lyase from Nitrosospira multiformis (strain ATCC 25196 / NCIMB 11849 / C 71).